Here is a 70-residue protein sequence, read N- to C-terminus: U-scoloptoxin(20)-Sm1a (70 aa).

Positions 1 to 24 are cleaved as a signal peptide; that stretch reads MKKRSQVFCIFIAMVLLILPLSMS.

It belongs to the scoloptoxin-20 family. Post-translationally, contains 3 disulfide bonds. As to expression, expressed by the venom gland.

It localises to the secreted. The chain is U-scoloptoxin(20)-Sm1a from Scolopendra morsitans (Tanzanian blue ringleg centipede).